The primary structure comprises 181 residues: MEQYHGTTIISVRRQTPEGVQVAIGGDGQVTLGNIVVKGTARKVRKLYHGKVLAGFAGATADAFTLFERFEAKLEKHQGHLTRAAIELTKDWRTDRVLRRLEAMLAVADASASLIITGNGDVLEPEQGIVSIGSGGAYAHSAAKALLTNTELSAEEIVRKSLAIAGELCIYTNMHHTVETL.

Residue T7 is part of the active site. Na(+)-binding residues include G166, C169, and T172.

This sequence belongs to the peptidase T1B family. HslV subfamily. As to quaternary structure, a double ring-shaped homohexamer of HslV is capped on each side by a ring-shaped HslU homohexamer. The assembly of the HslU/HslV complex is dependent on binding of ATP.

It is found in the cytoplasm. It catalyses the reaction ATP-dependent cleavage of peptide bonds with broad specificity.. Its activity is regulated as follows. Allosterically activated by HslU binding. In terms of biological role, protease subunit of a proteasome-like degradation complex believed to be a general protein degrading machinery. The protein is ATP-dependent protease subunit HslV of Delftia acidovorans (strain DSM 14801 / SPH-1).